A 221-amino-acid chain; its full sequence is Small ribosomal subunit protein uS2 (221 aa).

Belongs to the universal ribosomal protein uS2 family.

This is Small ribosomal subunit protein uS2 from Methanococcus maripaludis (strain C6 / ATCC BAA-1332).